A 415-amino-acid chain; its full sequence is Dynein assembly factor with WD repeat domains 1 (415 aa).

8 WD repeats span residues 90-129, 132-174, 175-214, 217-256, 259-298, 301-340, 343-384, and 386-415; these read AHILPLTNVALNKSGSCFITGSYDRTCKLWDTASGEELNT, GHRN…HTFR, GHTAEIVCLSFNPQSTLVATGSMDTTAKLWNIQNGEEVCT, GHSAEIISLSFNTSGDRIITGSFDHTVVVWDADTGGKVNI, GHCAEISSALFNWDCSLILTGSMDKTCMLWDATNGKCVAT, GHDDEILDSCFDYTGKLIATASADGTARIFSAATRKCIAK, GHEG…QVLE, and HTDEIFSCTFNYKGNIVITGSKDNTCRIWR.

Belongs to the WD repeat WDR69 family. Interacts with IFT46.

The protein localises to the cytoplasm. It is found in the cytoskeleton. It localises to the flagellum basal body. Its subcellular location is the flagellum axoneme. In terms of biological role, required for axonemal dynein assembly and ciliary motility in ciliated organs, including Kupffer's vesicle, during embryogenesis. Facilitates the onset of robust cilia motility during development. The chain is Dynein assembly factor with WD repeat domains 1 (DAW1) from Macaca fascicularis (Crab-eating macaque).